The chain runs to 160 residues: Arsenate reductase 2.1 (160 aa).

The Rhodanese domain occupies 42–143 (SNPRVAIIDV…WELSGQPVCR (102 aa)). Cysteine 94 acts as the Cysteine persulfide intermediate in catalysis.

It catalyses the reaction [glutaredoxin]-dithiol + arsenate + glutathione + H(+) = glutathionyl-S-S-[glutaredoxin] + arsenite + H2O. Functionally, possesses arsenate reductase activity in vitro. Catalyzes the reduction of arsenate [As(V)] to arsenite [As(III)]. May play a role in arsenic retention in roots. In terms of biological role, possesses phosphatase activity towards p-nitrophenyl phosphate in vitro. The polypeptide is Arsenate reductase 2.1 (ACR2.1) (Oryza sativa subsp. japonica (Rice)).